Here is a 1250-residue protein sequence, read N- to C-terminus: Myosin-1 (1250 aa).

The tract at residues methionine 1 to phenylalanine 43 is disordered. The Myosin motor domain occupies isoleucine 51–aspartate 730. Position 144–151 (glycine 144–threonine 151) interacts with ATP. At serine 372 the chain carries Phosphoserine. The interval serine 419–alanine 501 is actin-binding. IQ domains lie at histidine 734–cysteine 754 and alanine 755–glutamine 780. The region spanning arginine 788 to alanine 978 is the TH1 domain. Disordered regions lie at residues aspartate 962–proline 1079 and tryptophan 1126–tryptophan 1250. Residues alanine 1021–proline 1035 show a composition bias toward pro residues. Over residues glutamine 1036–alanine 1051 the composition is skewed to low complexity. Composition is skewed to pro residues over residues alanine 1064–lysine 1077 and threonine 1139–alanine 1151. The 62-residue stretch at proline 1076 to alanine 1137 folds into the SH3 domain. Over residues proline 1152–lysine 1170 the composition is skewed to low complexity. Residues valine 1201–asparagine 1222 show a composition bias toward polar residues. Low complexity predominate over residues alanine 1223–alanine 1232.

The protein belongs to the TRAFAC class myosin-kinesin ATPase superfamily. Myosin family. Post-translationally, phosphorylation of the TEDS site (Ser-372) is required for the polarization of the actin cytoskeleton. Phosphorylation probably activates the myosin-I ATPase activity.

The protein resides in the cytoplasm. The protein localises to the cytoskeleton. Its subcellular location is the actin patch. Its function is as follows. Type-I myosin implicated in the organization of the actin cytoskeleton. Required for proper actin cytoskeleton polarization. At the cell cortex, assembles in patch-like structures together with proteins from the actin-polymerizing machinery and promotes actin assembly. Functions as actin nucleation-promoting factor (NPF) for the Arp2/3 complex. Plays an important role in polarized growth, spore germination, hyphal morphogenesis, and septal wall formation. This chain is Myosin-1 (myoA), found in Neosartorya fischeri (strain ATCC 1020 / DSM 3700 / CBS 544.65 / FGSC A1164 / JCM 1740 / NRRL 181 / WB 181) (Aspergillus fischerianus).